A 1159-amino-acid polypeptide reads, in one-letter code: WASH complex subunit 5 (1159 aa).

Belongs to the strumpellin family. As to quaternary structure, component of the WASH complex.

It is found in the early endosome. Its function is as follows. Acts at least in part as component of the WASH complex which seems to regulate washc1 nucleation-promoting factor (NPF) activity and is required for its membrane targeting during endosomal sorting. The chain is WASH complex subunit 5 from Xenopus tropicalis (Western clawed frog).